A 428-amino-acid chain; its full sequence is Putative zinc metalloprotease SACOL1281 (428 aa).

Residue histidine 21 coordinates Zn(2+). Glutamate 22 is an active-site residue. Histidine 25 lines the Zn(2+) pocket. 4 helical membrane-spanning segments follow: residues 172-194, 309-331, 352-374, and 401-420; these read FLTL…IGLA, GSTY…GFSF, IISL…LIPI, and TTII…LVTW. Residues 186–269 enclose the PDZ domain; it reads ALVLFIGLAY…TKSVELTPKK (84 aa).

This sequence belongs to the peptidase M50B family. Requires Zn(2+) as cofactor.

The protein localises to the cell membrane. The sequence is that of Putative zinc metalloprotease SACOL1281 from Staphylococcus aureus (strain COL).